The chain runs to 473 residues: Aspartyl/glutamyl-tRNA(Asn/Gln) amidotransferase subunit B (473 aa).

The protein belongs to the GatB/GatE family. GatB subfamily. Heterotrimer of A, B and C subunits.

It carries out the reaction L-glutamyl-tRNA(Gln) + L-glutamine + ATP + H2O = L-glutaminyl-tRNA(Gln) + L-glutamate + ADP + phosphate + H(+). It catalyses the reaction L-aspartyl-tRNA(Asn) + L-glutamine + ATP + H2O = L-asparaginyl-tRNA(Asn) + L-glutamate + ADP + phosphate + 2 H(+). In terms of biological role, allows the formation of correctly charged Asn-tRNA(Asn) or Gln-tRNA(Gln) through the transamidation of misacylated Asp-tRNA(Asn) or Glu-tRNA(Gln) in organisms which lack either or both of asparaginyl-tRNA or glutaminyl-tRNA synthetases. The reaction takes place in the presence of glutamine and ATP through an activated phospho-Asp-tRNA(Asn) or phospho-Glu-tRNA(Gln). The protein is Aspartyl/glutamyl-tRNA(Asn/Gln) amidotransferase subunit B of Wolbachia pipientis subsp. Culex pipiens (strain wPip).